The following is a 376-amino-acid chain: MRYADPSANRDLLGSRTLLFIFICAFALVTLLQQILYGRNYIKRYFEFYEGPFEYNSTRCLELRHEILEVKVLSMVKQSELFDRWKSLQMCKWAMNISEANQFKSTLSRCCNAPAFLFTTQKNTPLGTKLKYEVDTSGIYHINQEIFRMFPKDMPYYRSQFKKCAVVGNGGILKNSRCGREINSADFVFRCNLPPISEKYTMDVGVKTDVVTVNPSIITERFHKLEKWRRPFYRVLQVYENASVLLPAFYNTRNTDVSIRVKYVLDDFESPQAVYYFHPQYLVNVSRYWLSLGVRAKRISTGLILVTAALELCEEVHLFGFWAFPMNPSGLYITHHYYDNVKPRPGFHAMPSEIFNFLHLHSRGILRVHTGTCSCC.

The Cytoplasmic segment spans residues 1–17 (MRYADPSANRDLLGSRT). Residues 18-38 (LLFIFICAFALVTLLQQILYG) form a helical; Signal-anchor for type II membrane protein membrane-spanning segment. Topologically, residues 39–376 (RNYIKRYFEF…RVHTGTCSCC (338 aa)) are lumenal. N-linked (GlcNAc...) asparagine glycans are attached at residues asparagine 56 and asparagine 96. 2 disulfide bridges follow: cysteine 164/cysteine 313 and cysteine 178/cysteine 373. Residues asparagine 192 and 214–216 (NPS) contribute to the substrate site. 2 N-linked (GlcNAc...) asparagine glycosylation sites follow: asparagine 241 and asparagine 284. 300 to 302 (STG) is a binding site for substrate. Residue histidine 348 is the Proton donor/acceptor of the active site.

Belongs to the glycosyltransferase 29 family. Expressed in fetal and adult brain, adult heart and skeletal muscle. In terms of tissue distribution, expressed in fetal and adult brain, not detected in adult heart and skeletal muscle.

It is found in the golgi apparatus membrane. The catalysed reaction is a ganglioside GT1b (d18:1(4E)) + CMP-N-acetyl-beta-neuraminate = a ganglioside GQ1b (d18:1(4E)) + CMP + H(+). It catalyses the reaction a ganglioside GD3 (d18:1(4E)) + CMP-N-acetyl-beta-neuraminate = a ganglioside GT3 (d18:1(4E)) + CMP + H(+). The enzyme catalyses a ganglioside GD1a (d18:1(4E)) + CMP-N-acetyl-beta-neuraminate = a ganglioside GT1a (d18:1(4E)) + CMP + H(+). It carries out the reaction a ganglioside GM1b (d18:1(4E)) + CMP-N-acetyl-beta-neuraminate = a ganglioside GD1c (d18:1(4E)) + CMP + H(+). The catalysed reaction is a ganglioside GQ1c (d18:1(4E)) + CMP-N-acetyl-beta-neuraminate = a ganglioside GP1c (d18:1(4E)) + CMP + H(+). Its pathway is protein modification; protein glycosylation. In terms of biological role, involved in the synthesis of gangliosides GD1c, GT1a, GQ1b, GP1c and GT3 from GD1a, GT1b, GM1b and GD3 respectively. The protein is Alpha-2,8-sialyltransferase 8E of Homo sapiens (Human).